A 139-amino-acid polypeptide reads, in one-letter code: Large-conductance mechanosensitive channel (139 aa).

2 consecutive transmembrane segments (helical) span residues V19–I39 and G81–V101.

It belongs to the MscL family. Homopentamer.

The protein localises to the cell inner membrane. Its function is as follows. Channel that opens in response to stretch forces in the membrane lipid bilayer. May participate in the regulation of osmotic pressure changes within the cell. This is Large-conductance mechanosensitive channel from Nitrobacter hamburgensis (strain DSM 10229 / NCIMB 13809 / X14).